A 496-amino-acid chain; its full sequence is Cytochrome P450 71B1 (496 aa).

Heme is bound at residue cysteine 436.

This sequence belongs to the cytochrome P450 family. The cofactor is heme.

The polypeptide is Cytochrome P450 71B1 (CYP71B1) (Thlaspi arvense (Field penny-cress)).